A 369-amino-acid polypeptide reads, in one-letter code: Phosphoribosylformylglycinamidine cyclo-ligase (369 aa).

Residues 1 to 22 (MSKRDTSQPKTGQPKTSKRRNG) are disordered.

Belongs to the AIR synthase family.

The protein resides in the cytoplasm. The enzyme catalyses 2-formamido-N(1)-(5-O-phospho-beta-D-ribosyl)acetamidine + ATP = 5-amino-1-(5-phospho-beta-D-ribosyl)imidazole + ADP + phosphate + H(+). The protein operates within purine metabolism; IMP biosynthesis via de novo pathway; 5-amino-1-(5-phospho-D-ribosyl)imidazole from N(2)-formyl-N(1)-(5-phospho-D-ribosyl)glycinamide: step 2/2. This Mesorhizobium japonicum (strain LMG 29417 / CECT 9101 / MAFF 303099) (Mesorhizobium loti (strain MAFF 303099)) protein is Phosphoribosylformylglycinamidine cyclo-ligase.